The chain runs to 299 residues: Phosphoribosylaminoimidazole-succinocarboxamide synthase (299 aa).

Belongs to the SAICAR synthetase family.

It carries out the reaction 5-amino-1-(5-phospho-D-ribosyl)imidazole-4-carboxylate + L-aspartate + ATP = (2S)-2-[5-amino-1-(5-phospho-beta-D-ribosyl)imidazole-4-carboxamido]succinate + ADP + phosphate + 2 H(+). Its pathway is purine metabolism; IMP biosynthesis via de novo pathway; 5-amino-1-(5-phospho-D-ribosyl)imidazole-4-carboxamide from 5-amino-1-(5-phospho-D-ribosyl)imidazole-4-carboxylate: step 1/2. The polypeptide is Phosphoribosylaminoimidazole-succinocarboxamide synthase (Streptomyces coelicolor (strain ATCC BAA-471 / A3(2) / M145)).